We begin with the raw amino-acid sequence, 329 residues long: Nuclear pore complex protein NUP35 (329 aa).

2 disordered regions span residues 48–105 and 123–167; these read NFGG…GKGK and VSGS…PPRE. The segment covering 123-139 has biased composition (polar residues); the sequence is VSGSPSWWSQSKAGSST. The region spanning 183 to 264 is the RRM Nup35-type domain; it reads LDEEEWVTVY…KPVDPIQKQA (82 aa). The interval 271-315 is disordered; it reads NQGFMPLPPPSSTRNTARPLSRPQYLQNGSAFSPQPSGGAMASPS. The segment covering 282–306 has biased composition (polar residues); sequence STRNTARPLSRPQYLQNGSAFSPQP.

Belongs to the Nup35 family. In terms of assembly, part of the nuclear pore complex (NPC). The NPC has an eight-fold symmetrical structure comprising a central transport channel and two rings, the cytoplasmic and nuclear rings, to which eight filaments are attached. The cytoplasmic filaments have loose ends, while the nuclear filaments are joined in a distal ring, forming a nuclear basket. NPCs are highly dynamic in configuration and composition, and can be devided in 3 subcomplexes, the NUP62 subcomplex, the NUP107-160 subcomplex and the NUP93 subcomplex, containing approximately 30 different nucleoporin proteins.

It is found in the nucleus. The protein resides in the nuclear pore complex. The chain is Nuclear pore complex protein NUP35 from Arabidopsis thaliana (Mouse-ear cress).